A 244-amino-acid chain; its full sequence is Protein crossbronx (244 aa).

The 157-residue stretch at Gln20–Glu176 folds into the UBC core domain. The disordered stretch occupies residues Ala209–Glu244.

The protein belongs to the ubiquitin-conjugating enzyme family. FTS subfamily.

In Drosophila sechellia (Fruit fly), this protein is Protein crossbronx (cbx).